The sequence spans 301 residues: Homoserine O-acetyltransferase (301 aa).

Cys-142 serves as the catalytic Acyl-thioester intermediate. Lys-163 and Ser-192 together coordinate substrate. His-235 (proton acceptor) is an active-site residue. Glu-237 is an active-site residue. Position 249 (Arg-249) interacts with substrate.

The protein belongs to the MetA family. In terms of assembly, homodimer.

It localises to the cytoplasm. The enzyme catalyses L-homoserine + acetyl-CoA = O-acetyl-L-homoserine + CoA. The protein operates within amino-acid biosynthesis; L-methionine biosynthesis via de novo pathway; O-acetyl-L-homoserine from L-homoserine: step 1/1. In terms of biological role, transfers an acetyl group from acetyl-CoA to L-homoserine, forming acetyl-L-homoserine. Utilizes a ping-pong kinetic mechanism in which the acetyl group of acetyl-CoA is initially transferred to the enzyme to form an acetyl-enzyme intermediate before subsequent transfer to homoserine to form the final product, O-acetylhomoserine. Cannot use succinyl-CoA as the acyl donor. In Bacillus cereus (strain ATCC 10987 / NRS 248), this protein is Homoserine O-acetyltransferase.